The primary structure comprises 387 residues: 3-ketoacyl-CoA thiolase (387 aa).

Cys-91 (acyl-thioester intermediate) is an active-site residue. Active-site proton acceptor residues include His-343 and Cys-373.

This sequence belongs to the thiolase-like superfamily. Thiolase family. Heterotetramer of two alpha chains (FadB) and two beta chains (FadA).

Its subcellular location is the cytoplasm. It carries out the reaction an acyl-CoA + acetyl-CoA = a 3-oxoacyl-CoA + CoA. Its pathway is lipid metabolism; fatty acid beta-oxidation. Its function is as follows. Catalyzes the final step of fatty acid oxidation in which acetyl-CoA is released and the CoA ester of a fatty acid two carbons shorter is formed. This chain is 3-ketoacyl-CoA thiolase, found in Shigella boydii serotype 4 (strain Sb227).